The chain runs to 497 residues: Glycerol kinase (497 aa).

Thr-13 lines the ADP pocket. ATP-binding residues include Thr-13, Thr-14, and Ser-15. Sn-glycerol 3-phosphate is bound at residue Thr-13. Residue Arg-17 coordinates ADP. Residues Arg-83, Glu-84, and Tyr-135 each coordinate sn-glycerol 3-phosphate. Glycerol-binding residues include Arg-83, Glu-84, and Tyr-135. His-231 carries the post-translational modification Phosphohistidine; by HPr. Position 245 (Asp-245) interacts with sn-glycerol 3-phosphate. Residues Asp-245 and Gln-246 each contribute to the glycerol site. Residues Thr-267 and Gly-310 each coordinate ADP. ATP is bound by residues Thr-267, Gly-310, Gln-314, and Gly-411. 2 residues coordinate ADP: Gly-411 and Asn-415.

This sequence belongs to the FGGY kinase family. Homotetramer and homodimer (in equilibrium). The phosphoenolpyruvate-dependent sugar phosphotransferase system (PTS), including enzyme I, and histidine-containing protein (HPr) are required for the phosphorylation, which leads to the activation of the enzyme.

It carries out the reaction glycerol + ATP = sn-glycerol 3-phosphate + ADP + H(+). It participates in polyol metabolism; glycerol degradation via glycerol kinase pathway; sn-glycerol 3-phosphate from glycerol: step 1/1. Activated by phosphorylation and inhibited by fructose 1,6-bisphosphate (FBP). Key enzyme in the regulation of glycerol uptake and metabolism. Catalyzes the phosphorylation of glycerol to yield sn-glycerol 3-phosphate. This chain is Glycerol kinase, found in Listeria monocytogenes serotype 4b (strain F2365).